We begin with the raw amino-acid sequence, 97 residues long: Co-chaperonin GroES (97 aa).

Belongs to the GroES chaperonin family. In terms of assembly, heptamer of 7 subunits arranged in a ring. Interacts with the chaperonin GroEL.

Its subcellular location is the cytoplasm. In terms of biological role, together with the chaperonin GroEL, plays an essential role in assisting protein folding. The GroEL-GroES system forms a nano-cage that allows encapsulation of the non-native substrate proteins and provides a physical environment optimized to promote and accelerate protein folding. GroES binds to the apical surface of the GroEL ring, thereby capping the opening of the GroEL channel. This chain is Co-chaperonin GroES, found in Burkholderia cepacia (Pseudomonas cepacia).